The chain runs to 527 residues: Tyrosine--tRNA ligase, cytoplasmic (527 aa).

Position 39 (Tyr39) interacts with L-tyrosine. The 'HIGH' region signature appears at 44-52; the sequence is TTGKPHVAY. 4 residues coordinate L-tyrosine: Tyr166, Gln170, Asp173, and Gln188. A 'KMSKS' region motif is present at residues 222–226; that stretch reads KMSSS. The short motif at 242-247 is the Nuclear localization signal element; it reads KKKLKK. Residues 337 to 362 form a disordered region; sequence TNAAYPNPSKAKPAEKGTKNSEPETI. A compositionally biased stretch (basic and acidic residues) spans 348-358; that stretch reads KPAEKGTKNSE. A tRNA-binding domain is found at 363-467; it reads VPSRLDIRVG…AECCAGERVY (105 aa).

It belongs to the class-I aminoacyl-tRNA synthetase family. As to quaternary structure, homodimer.

Its subcellular location is the cytoplasm. It is found in the nucleus. The enzyme catalyses tRNA(Tyr) + L-tyrosine + ATP = L-tyrosyl-tRNA(Tyr) + AMP + diphosphate + H(+). In terms of biological role, catalyzes the attachment of tyrosine to tRNA(Tyr) in a two-step reaction: tyrosine is first activated by ATP to form Tyr-AMP and then transferred to the acceptor end of tRNA(Tyr). In Gallus gallus (Chicken), this protein is Tyrosine--tRNA ligase, cytoplasmic (YARS1).